Here is a 437-residue protein sequence, read N- to C-terminus: Argininosuccinate lyase (437 aa).

The protein belongs to the lyase 1 family. Argininosuccinate lyase subfamily.

It localises to the cytoplasm. The enzyme catalyses 2-(N(omega)-L-arginino)succinate = fumarate + L-arginine. The protein operates within amino-acid biosynthesis; L-arginine biosynthesis; L-arginine from L-ornithine and carbamoyl phosphate: step 3/3. The protein is Argininosuccinate lyase of Clostridium acetobutylicum (strain ATCC 824 / DSM 792 / JCM 1419 / IAM 19013 / LMG 5710 / NBRC 13948 / NRRL B-527 / VKM B-1787 / 2291 / W).